The sequence spans 338 residues: UDP-glucose 4-epimerase (338 aa).

Residues 11-12 (YI), 31-36 (DNLCNS), 58-59 (DI), 80-84 (FAGLK), N99, S124, Y149, K153, and F178 contribute to the NAD(+) site. Substrate contacts are provided by S124 and Y149. Y149 functions as the Proton acceptor in the catalytic mechanism. Substrate contacts are provided by residues N179, 199 to 200 (NL), 216 to 218 (AVF), R231, 292 to 295 (RDGD), and Y299.

Belongs to the NAD(P)-dependent epimerase/dehydratase family. In terms of assembly, homodimer. NAD(+) serves as cofactor.

It catalyses the reaction UDP-alpha-D-glucose = UDP-alpha-D-galactose. It functions in the pathway carbohydrate metabolism; galactose metabolism. Involved in the metabolism of galactose. Catalyzes the conversion of UDP-galactose (UDP-Gal) to UDP-glucose (UDP-Glc) through a mechanism involving the transient reduction of NAD. This chain is UDP-glucose 4-epimerase (galE), found in Salmonella typhi.